A 631-amino-acid chain; its full sequence is Leucine aminopeptidase 2-2 (631 aa).

Residues 140–142 (QCQ) and 265–270 (PYGGME) each bind substrate. H294 lines the Zn(2+) pocket. E295 serves as the catalytic Proton acceptor. Zn(2+)-binding residues include H298 and E317. Residue Y395 is the Proton donor of the active site.

Belongs to the peptidase M1 family. It depends on Zn(2+) as a cofactor.

The protein localises to the cytoplasm. It localises to the nucleus. It catalyses the reaction an epoxide + H2O = an ethanediol. Its function is as follows. Aminopeptidase that preferentially cleaves di- and tripeptides. Also has low epoxide hydrolase activity (in vitro). Can hydrolyze the epoxide leukotriene LTA(4) but it forms preferentially 5,6-dihydroxy-7,9,11,14-eicosatetraenoic acid rather than the cytokine leukotriene B(4) as the product compared to the homologous mammalian enzyme (in vitro). This is Leucine aminopeptidase 2-2 from Meyerozyma guilliermondii (strain ATCC 6260 / CBS 566 / DSM 6381 / JCM 1539 / NBRC 10279 / NRRL Y-324) (Yeast).